Consider the following 61-residue polypeptide: Short neurotoxin 1 (61 aa).

4 cysteine pairs are disulfide-bonded: Cys3-Cys23, Cys17-Cys40, Cys42-Cys53, and Cys54-Cys59.

It belongs to the three-finger toxin family. Short-chain subfamily. Type I alpha-neurotoxin sub-subfamily. As to expression, expressed by the venom gland.

It localises to the secreted. Binds to muscle nicotinic acetylcholine receptor (nAChR) and inhibit acetylcholine from binding to the receptor, thereby impairing neuromuscular transmission. The protein is Short neurotoxin 1 of Naja annulata annulata (Banded water cobra).